A 95-amino-acid polypeptide reads, in one-letter code: Large ribosomal subunit protein bL28 (95 aa).

A disordered region spans residues 1 to 28; the sequence is MARKRTLGGKAPQAGNKVSHSQRKTRRQ.

This sequence belongs to the bacterial ribosomal protein bL28 family.

The chain is Large ribosomal subunit protein bL28 from Magnetococcus marinus (strain ATCC BAA-1437 / JCM 17883 / MC-1).